A 507-amino-acid chain; its full sequence is ATP synthase subunit alpha, chloroplastic (507 aa).

170-177 (GDRQTGKT) serves as a coordination point for ATP.

This sequence belongs to the ATPase alpha/beta chains family. F-type ATPases have 2 components, CF(1) - the catalytic core - and CF(0) - the membrane proton channel. CF(1) has five subunits: alpha(3), beta(3), gamma(1), delta(1), epsilon(1). CF(0) has four main subunits: a, b, b' and c.

It is found in the plastid. Its subcellular location is the chloroplast thylakoid membrane. The catalysed reaction is ATP + H2O + 4 H(+)(in) = ADP + phosphate + 5 H(+)(out). Functionally, produces ATP from ADP in the presence of a proton gradient across the membrane. The alpha chain is a regulatory subunit. The polypeptide is ATP synthase subunit alpha, chloroplastic (Chloranthus spicatus (Chulantree)).